Here is a 213-residue protein sequence, read N- to C-terminus: Transcriptional regulatory protein CrdR (213 aa).

A Response regulatory domain is found at 4–119; sequence KIFLLEDDYL…ELEARIKRFF (116 aa). The residue at position 53 (Asp53) is a 4-aspartylphosphate. A DNA-binding region (ompR/PhoB-type) is located at residues 121–212; it reads DDPIEIMPNI…HKGVGYRFNP (92 aa).

Post-translationally, phosphorylated by CrdS.

Its function is as follows. Member of the two-component regulatory system CrdR/CrdS that induces the transcriptional induction of the copper resistance determinant CrdA. Upon phosphorylation by CrdS, functions as a transcriptional regulator by direct binding to promoter regions of target genes including the crdA promoter or nitric oxide-responsive gene promoters. In Helicobacter pylori (strain ATCC 700392 / 26695) (Campylobacter pylori), this protein is Transcriptional regulatory protein CrdR.